A 258-amino-acid chain; its full sequence is MLILISPAKTLDYQSPLTTTRYTLPELLDNSQHLIHEARKLTPPQISTLMRISDKLAGINAARFHDWQPDFTPENARQAILAFKGDVYTGLQAETFSEDDFDFAQQHLRMLSGLYGVLRPLDLMQPYRLEMGIRLENARGKDLYQFWGDIITNKLNEALAAQGDNVVINLASDEYFKSVKPKKLNAEIIKPVFLDEKNGKFKIISFYAKKARGLMSRFIIENRLTKPEQLTGFNSEGYFFDEASSSNGELVFKRYEQR.

It belongs to the UPF0246 family.

The chain is UPF0246 protein YaaA from Shigella sonnei (strain Ss046).